Consider the following 779-residue polypeptide: Probable ATP-dependent RNA helicase DHX40 (779 aa).

The tract at residues 1–28 (MSRFPAVAGRAPRRQEEGERSRDLQEER) is disordered. Positions 13 to 28 (RRQEEGERSRDLQEER) are enriched in basic and acidic residues. Residues 63–231 (IQAVRDNSFL…FGNCPIFDIP (169 aa)) form the Helicase ATP-binding domain. 76–83 (GNTGSGKT) contacts ATP. Positions 173 to 176 (DEAH) match the DEAH box motif. Residues 263-442 (TMDIHLNEMA…SVVLTLKCLA (180 aa)) enclose the Helicase C-terminal domain. Positions 737 to 779 (SKDVLKKMQRRNDDKSISDARARFLERKQQRTQDHSDTRKETG) are disordered.

It belongs to the DEAD box helicase family. DEAH subfamily. Ubiquitously expressed.

It carries out the reaction ATP + H2O = ADP + phosphate + H(+). In terms of biological role, probable ATP-dependent RNA helicase. In Homo sapiens (Human), this protein is Probable ATP-dependent RNA helicase DHX40 (DHX40).